A 220-amino-acid polypeptide reads, in one-letter code: MGKKINPLGFRLGANQSHRSIWFAQSKSYSRGLQEDEKIRDCIQHYVEKNTRISSGFEGKGISHIEIQKKIDLIQVIIYMGSPNSLMEGRTRGIDELQTNVQKEFLSVNRRLNIAIIRVAKPYAQPTILAEHIALQLKNRVSFRKAMKSAIELTEQADTKGIQIQIAGRIDGKEIARVEWIREGRVPLQTIRAKIDYCSYTVRTIYGILGIKIWIFLDEK.

A KH type-2 domain is found at 43-120 (IQHYVEKNTR…RLNIAIIRVA (78 aa)).

Belongs to the universal ribosomal protein uS3 family. As to quaternary structure, part of the 30S ribosomal subunit.

The protein resides in the plastid. It localises to the chloroplast. In Piper cenocladum (Ant piper), this protein is Small ribosomal subunit protein uS3c (rps3).